The sequence spans 643 residues: MSNFYKLLKEKFPRKEDIVTEMINLEAICQLPKGTEYFISDLHGEYDAVDYLLRTGAGSIRAKLLDCFDWQKIVAVDLDDFCILLYYPKEKLAFDKMNLSASAYKTKLWEMIPLQIQVLKYFSSKYTKSKVRKQLSGKFAYIIEELLAEIDRNPEKKSYFDTIIEKLFELDQVEDLIIVLSQTIQVLIIDHLHVVGDIYDRGRYPDRILNRLMAFPNLDIQWGNHDVTWMGAASGSYLCMVNVIRIAARYNNITLIEDRYGINLRRLVDYSRRYYEPLPSFVPILDGEEMTHPDELDLLNMIQQATAILQFKLEAQLIDRRPEFQMHNRQLINQVNYKDLSISIKEVVHQLKDFNSRCIDSKNPSRLTSEEEELLQQLMIAFQTSESLKKHIDFLFEKGSMYLTYNDNLLFHGCIPMHSNGDFKSFKIAGKTYGGRDLLDLFESQIRLAYARPEKHDDLATDIIWYLWCGENSSLFGKNAMTTFERYYVSDKVTHQERKNPYFKLRDKDDICTALLQEFDLPKFGHIVNGHTPVKEKNGEQPIKANGKMLVIDGGFAKGYQKNTGLAGYTLIYNSYGIQLISHLPFTSIEEVLSGTNYIIDTKRLVEEAKDRILVKDTTIGQKLTKEIKDLDHLYRHFQEYDD.

It belongs to the FBPase class 3 family. The cofactor is Mn(2+).

The catalysed reaction is beta-D-fructose 1,6-bisphosphate + H2O = beta-D-fructose 6-phosphate + phosphate. The protein operates within carbohydrate biosynthesis; gluconeogenesis. This chain is Fructose-1,6-bisphosphatase class 3, found in Streptococcus agalactiae serotype Ia (strain ATCC 27591 / A909 / CDC SS700).